The following is a 477-amino-acid chain: Bifunctional protein HldE (477 aa).

Residues 1-319 (MTVIFPNFSK…NIMNSHICTT (319 aa)) are ribokinase. 195-198 (NISE) lines the ATP pocket. Asp-264 is an active-site residue. The segment at 346–477 (MTNGVFDILH…NIINAIKRKN (132 aa)) is cytidylyltransferase.

The protein in the N-terminal section; belongs to the carbohydrate kinase PfkB family. In the C-terminal section; belongs to the cytidylyltransferase family. In terms of assembly, homodimer.

The enzyme catalyses D-glycero-beta-D-manno-heptose 7-phosphate + ATP = D-glycero-beta-D-manno-heptose 1,7-bisphosphate + ADP + H(+). It catalyses the reaction D-glycero-beta-D-manno-heptose 1-phosphate + ATP + H(+) = ADP-D-glycero-beta-D-manno-heptose + diphosphate. It participates in nucleotide-sugar biosynthesis; ADP-L-glycero-beta-D-manno-heptose biosynthesis; ADP-L-glycero-beta-D-manno-heptose from D-glycero-beta-D-manno-heptose 7-phosphate: step 1/4. It functions in the pathway nucleotide-sugar biosynthesis; ADP-L-glycero-beta-D-manno-heptose biosynthesis; ADP-L-glycero-beta-D-manno-heptose from D-glycero-beta-D-manno-heptose 7-phosphate: step 3/4. In terms of biological role, catalyzes the phosphorylation of D-glycero-D-manno-heptose 7-phosphate at the C-1 position to selectively form D-glycero-beta-D-manno-heptose-1,7-bisphosphate. Functionally, catalyzes the ADP transfer from ATP to D-glycero-beta-D-manno-heptose 1-phosphate, yielding ADP-D-glycero-beta-D-manno-heptose. The sequence is that of Bifunctional protein HldE from Blochmanniella pennsylvanica (strain BPEN).